Consider the following 1551-residue polypeptide: Pentafunctional AROM polypeptide 1 (1551 aa).

Residues 1-379 (MSIEKVSILG…YESKAHQIFK (379 aa)) form a 3-dehydroquinate synthase region. Residues 42–44 (DTN), 80–83 (ENHK), 111–113 (GGV), and Asp116 each bind NAD(+). Arg127 is a 7-phospho-2-dehydro-3-deoxy-D-arabino-heptonate binding site. 136-137 (TT) serves as a coordination point for NAD(+). Asp143 and Lys149 together coordinate 7-phospho-2-dehydro-3-deoxy-D-arabino-heptonate. Lys158 contributes to the NAD(+) binding site. Asn159 provides a ligand contact to 7-phospho-2-dehydro-3-deoxy-D-arabino-heptonate. Residues 176–179 (FLQT) and Asn187 contribute to the NAD(+) site. Residue Glu191 participates in Zn(2+) binding. 7-phospho-2-dehydro-3-deoxy-D-arabino-heptonate-binding positions include 191–194 (EVVK) and Lys243. The active-site Proton acceptor; for 3-dehydroquinate synthase activity is the Glu253. Residues 257-261 (RNLLN) and His264 each bind 7-phospho-2-dehydro-3-deoxy-D-arabino-heptonate. His264 provides a ligand contact to Zn(2+). His268 functions as the Proton acceptor; for 3-dehydroquinate synthase activity in the catalytic mechanism. Residues His280 and Lys351 each contribute to the 7-phospho-2-dehydro-3-deoxy-D-arabino-heptonate site. A Zn(2+)-binding site is contributed by His280. The tract at residues 392–835 (VHPFANRHPE…WDVLHSKFNA (444 aa)) is EPSP synthase. Positions 854–1044 (DRSIVIIGMR…LPATRSTFVT (191 aa)) are shikimate kinase. Residue 861–868 (GMRAAGKT) participates in ATP binding. Positions 1045–1258 (LTYPDLRKVP…IGVGQLSLKE (214 aa)) are 3-dehydroquinase. The active-site Proton acceptor; for 3-dehydroquinate dehydratase activity is the His1162. Lys1191 (schiff-base intermediate with substrate; for 3-dehydroquinate dehydratase activity) is an active-site residue. Residues 1271-1551 (EKEFWVVGSP…KVIHSAVLNE (281 aa)) are shikimate dehydrogenase.

In the N-terminal section; belongs to the sugar phosphate cyclases superfamily. Dehydroquinate synthase family. It in the 2nd section; belongs to the EPSP synthase family. This sequence in the 3rd section; belongs to the shikimate kinase family. The protein in the 4th section; belongs to the type-I 3-dehydroquinase family. In the C-terminal section; belongs to the shikimate dehydrogenase family. In terms of assembly, homodimer. Zn(2+) serves as cofactor.

It localises to the cytoplasm. The enzyme catalyses 7-phospho-2-dehydro-3-deoxy-D-arabino-heptonate = 3-dehydroquinate + phosphate. It carries out the reaction 3-dehydroquinate = 3-dehydroshikimate + H2O. It catalyses the reaction shikimate + NADP(+) = 3-dehydroshikimate + NADPH + H(+). The catalysed reaction is shikimate + ATP = 3-phosphoshikimate + ADP + H(+). The enzyme catalyses 3-phosphoshikimate + phosphoenolpyruvate = 5-O-(1-carboxyvinyl)-3-phosphoshikimate + phosphate. It functions in the pathway metabolic intermediate biosynthesis; chorismate biosynthesis; chorismate from D-erythrose 4-phosphate and phosphoenolpyruvate: step 2/7. It participates in metabolic intermediate biosynthesis; chorismate biosynthesis; chorismate from D-erythrose 4-phosphate and phosphoenolpyruvate: step 3/7. Its pathway is metabolic intermediate biosynthesis; chorismate biosynthesis; chorismate from D-erythrose 4-phosphate and phosphoenolpyruvate: step 4/7. The protein operates within metabolic intermediate biosynthesis; chorismate biosynthesis; chorismate from D-erythrose 4-phosphate and phosphoenolpyruvate: step 5/7. It functions in the pathway metabolic intermediate biosynthesis; chorismate biosynthesis; chorismate from D-erythrose 4-phosphate and phosphoenolpyruvate: step 6/7. In terms of biological role, the AROM polypeptide catalyzes 5 consecutive enzymatic reactions in prechorismate polyaromatic amino acid biosynthesis. In Lodderomyces elongisporus (strain ATCC 11503 / CBS 2605 / JCM 1781 / NBRC 1676 / NRRL YB-4239) (Yeast), this protein is Pentafunctional AROM polypeptide 1.